The chain runs to 521 residues: Bifunctional purine biosynthesis protein PurH (521 aa).

The 145-residue stretch at 1–145 (MIKQALISVS…KNHRDVTVVV (145 aa)) folds into the MGS-like domain.

Belongs to the PurH family.

It carries out the reaction (6R)-10-formyltetrahydrofolate + 5-amino-1-(5-phospho-beta-D-ribosyl)imidazole-4-carboxamide = 5-formamido-1-(5-phospho-D-ribosyl)imidazole-4-carboxamide + (6S)-5,6,7,8-tetrahydrofolate. The enzyme catalyses IMP + H2O = 5-formamido-1-(5-phospho-D-ribosyl)imidazole-4-carboxamide. It participates in purine metabolism; IMP biosynthesis via de novo pathway; 5-formamido-1-(5-phospho-D-ribosyl)imidazole-4-carboxamide from 5-amino-1-(5-phospho-D-ribosyl)imidazole-4-carboxamide (10-formyl THF route): step 1/1. Its pathway is purine metabolism; IMP biosynthesis via de novo pathway; IMP from 5-formamido-1-(5-phospho-D-ribosyl)imidazole-4-carboxamide: step 1/1. The protein is Bifunctional purine biosynthesis protein PurH of Burkholderia ambifaria (strain MC40-6).